We begin with the raw amino-acid sequence, 351 residues long: MSVTMTLGQLAEVLGATLKGPEALQITGLATLQEAGPTQLSFLANPQYRKYLDNSQAGAVLLKAADAEGFAGNTLVVADPYLAYARISHLFDPKPKAEAGIHPSAVVAEDAQVDASASIGPFAVIESGARIGANVSIGAHCFIGARCVVGEGGWLAPRVTLYHDVTIGKRVVIQSGAVIGGEGFGFANEKGIWRKIAQIGGVTIGDDVEIGVNTAIDRGALSDTRIGDGVKLDNQIQIAHNVQIGDHTAMAACVGISGSTRIGKHCMLAGGVGLVGHIDICDNVFVSGMTMVTRSITEPGSYSSGTAMQPLADWRKSAARIRHLDDMAKRLQQLEKRVDTVTSGGLPTSEG.

Catalysis depends on histidine 240, which acts as the Proton acceptor.

The protein belongs to the transferase hexapeptide repeat family. LpxD subfamily. As to quaternary structure, homotrimer.

It carries out the reaction a UDP-3-O-[(3R)-3-hydroxyacyl]-alpha-D-glucosamine + a (3R)-hydroxyacyl-[ACP] = a UDP-2-N,3-O-bis[(3R)-3-hydroxyacyl]-alpha-D-glucosamine + holo-[ACP] + H(+). The protein operates within bacterial outer membrane biogenesis; LPS lipid A biosynthesis. Catalyzes the N-acylation of UDP-3-O-acylglucosamine using 3-hydroxyacyl-ACP as the acyl donor. Is involved in the biosynthesis of lipid A, a phosphorylated glycolipid that anchors the lipopolysaccharide to the outer membrane of the cell. This is UDP-3-O-acylglucosamine N-acyltransferase from Pseudomonas putida (strain ATCC 700007 / DSM 6899 / JCM 31910 / BCRC 17059 / LMG 24140 / F1).